Here is a 550-residue protein sequence, read N- to C-terminus: NAD(P)H-quinone oxidoreductase chain 4 3 (550 aa).

14 helical membrane-spanning segments follow: residues 5 to 25, 36 to 56, 86 to 106, 114 to 134, 135 to 155, 168 to 188, 212 to 232, 243 to 263, 277 to 297, 311 to 331, 332 to 352, 375 to 395, 418 to 438, and 489 to 509; these read FPWL…IPLL, YALI…WQHF, ISAP…FSAW, LFYA…VAKD, LFLF…LVCI, FLLY…ALSL, MWLY…FPLH, SSPV…YGLM, FAPL…FSSF, VSHM…GING, AMLQ…LAGV, VFAM…MSGF, ITVF…LSML, and IFIA…PKLL.

It belongs to the complex I subunit 4 family.

Its subcellular location is the cellular thylakoid membrane. The catalysed reaction is a plastoquinone + NADH + (n+1) H(+)(in) = a plastoquinol + NAD(+) + n H(+)(out). It carries out the reaction a plastoquinone + NADPH + (n+1) H(+)(in) = a plastoquinol + NADP(+) + n H(+)(out). Its function is as follows. NDH-1 shuttles electrons from NAD(P)H, via FMN and iron-sulfur (Fe-S) centers, to quinones in the respiratory chain. The immediate electron acceptor for the enzyme in this species is believed to be plastoquinone. Couples the redox reaction to proton translocation (for every two electrons transferred, four hydrogen ions are translocated across the cytoplasmic membrane), and thus conserves the redox energy in a proton gradient. This chain is NAD(P)H-quinone oxidoreductase chain 4 3, found in Picosynechococcus sp. (strain ATCC 27264 / PCC 7002 / PR-6) (Agmenellum quadruplicatum).